Here is a 530-residue protein sequence, read N- to C-terminus: Glucose-6-phosphate isomerase (530 aa).

Glutamate 356 serves as the catalytic Proton donor. Catalysis depends on residues histidine 387 and lysine 502.

Belongs to the GPI family.

The protein localises to the cytoplasm. It catalyses the reaction alpha-D-glucose 6-phosphate = beta-D-fructose 6-phosphate. It participates in carbohydrate biosynthesis; gluconeogenesis. The protein operates within carbohydrate degradation; glycolysis; D-glyceraldehyde 3-phosphate and glycerone phosphate from D-glucose: step 2/4. Functionally, catalyzes the reversible isomerization of glucose-6-phosphate to fructose-6-phosphate. The protein is Glucose-6-phosphate isomerase of Borreliella burgdorferi (strain ATCC 35210 / DSM 4680 / CIP 102532 / B31) (Borrelia burgdorferi).